Reading from the N-terminus, the 249-residue chain is uncharacterized protein (249 aa).

A divalent metal cation-binding residues include histidine 10, histidine 12, glutamate 95, histidine 129, histidine 150, and aspartate 198.

The protein belongs to the metallo-dependent hydrolases superfamily. TatD-type hydrolase family. Requires a divalent metal cation as cofactor.

This is an uncharacterized protein from Methanocaldococcus jannaschii (strain ATCC 43067 / DSM 2661 / JAL-1 / JCM 10045 / NBRC 100440) (Methanococcus jannaschii).